The chain runs to 486 residues: Heme A synthase COX15 (486 aa).

The transit peptide at 1–33 directs the protein to the mitochondrion; it reads MLFRNIEVGRQAAKLLTRTSSRLAWQSIGASRN. The Mitochondrial matrix segment spans residues 34–85; the sequence is ISTIRQQIRKTQLYNFKKTVSIRPFSLSSPVFKPHVASESNPIESRLKTSKN. A helical transmembrane segment spans residues 86-106; sequence VAYWLIGTSGLVFGIVVLGGL. Topologically, residues 107 to 170 are mitochondrial intermembrane; the sequence is TRLTESGLSI…FIFFMEWIHR (64 aa). Histidine 169 is a binding site for heme o. A helical membrane pass occupies residues 171–191; that stretch reads LWGRAIGAVFILPAVYFAVSK. Topologically, residues 192 to 200 are mitochondrial matrix; that stretch reads KTSGHVNKR. The helical transmembrane segment at 201–221 threads the bilayer; that stretch reads LFGLAGLLGLQGFVGWWMVKS. At 222–243 the chain is on the mitochondrial intermembrane side; the sequence is GLDQEQLDARKSKPTVSQYRLT. Residues 244-264 form a helical membrane-spanning segment; the sequence is THLGTAFFLYMGMLWTGLEIL. Position 245 (histidine 245) interacts with heme o. The Mitochondrial matrix segment spans residues 265 to 293; it reads RECKWIKNPVQAISLFKKLDNPAIGPMRK. The chain crosses the membrane as a helical span at residues 294–314; it reads ISLALLAVSFLTAMSGGMVAG. Residues 315–364 lie on the Mitochondrial intermembrane side of the membrane; sequence LDAGWVYNTWPKMGERWFPSSRELMDENFCRREDKKDLWWRNLLENPVTV. Residues 365-387 form a helical membrane-spanning segment; that stretch reads QLVHRTCAYVAFTSVLAAHMYAI. Heme b is bound at residue histidine 368. Over 388 to 402 the chain is Mitochondrial matrix; it reads KKKAVIPRNAMTSLH. Residues 403 to 423 form a helical membrane-spanning segment; sequence VMMGVVTLQATLGILTILYLV. Proline 424 is a topological domain (mitochondrial intermembrane). A helical transmembrane segment spans residues 425 to 445; it reads ISLASIHQAGALALLTSSLVF. Histidine 431 is a heme b binding site. At 446-486 the chain is on the mitochondrial matrix side; it reads ASQLRKPRAPMRNVIITLPHSSKVTSGKILSEASKLASKPL.

The protein belongs to the COX15/CtaA family. Type 2 subfamily. As to quaternary structure, forms 200-350 kDa oligomeric complexes independent on heme binding. In addition to form homooligomeric complexes, a portion also associates with the mitochondrial respiratory supercomplexes. Interacts with CcO assembly factors PET117, SHY1, COA3 and COA1, CcO subunit COX13 and cytochrome b-c1 subunit COR1. It depends on heme b as a cofactor.

It is found in the mitochondrion inner membrane. It catalyses the reaction Fe(II)-heme o + 2 A + H2O = Fe(II)-heme a + 2 AH2. The protein operates within porphyrin-containing compound metabolism; heme A biosynthesis; heme A from heme O: step 1/1. Catalyzes the second reaction in the biosynthesis of heme A, a prosthetic group of mitochondrial cytochrome c oxidase (CcO). Heme A is synthesized from heme B by two sequential enzymatic reactions catalyzed by heme O synthase (HOS/COX10) and heme A synthase (HAS/COX15). HAS catalyzes the conversion of heme O to heme A by two successive hydroxylations of the methyl group at C8, in a reaction that involves matrix ferredoxin YAH1 and ferredoxin reductase ARH1. The first hydroxylation forms heme I, the second hydroxylation results in an unstable dihydroxymethyl group, which spontaneously dehydrates, resulting in the formyl group of heme A. May also play a secondary role in CcO assembly. Plays a role in the maturation of COX1, the heme A-containing structural CcO subunit, possibly by interacting with the COX1-containing sub-assembly complexes that form prior to heme A insertion. May also positively regulate the upstream enzymatic reaction, farnesylation of heme B by HOS/COX10. In Saccharomyces cerevisiae (strain ATCC 204508 / S288c) (Baker's yeast), this protein is Heme A synthase COX15.